Consider the following 202-residue polypeptide: Dephospho-CoA kinase (202 aa).

In terms of domain architecture, DPCK spans 6-202 (KISVTGDPSS…QCFKALKGTI (197 aa)). 14–19 (SSGKTE) provides a ligand contact to ATP.

This sequence belongs to the CoaE family.

It is found in the cytoplasm. The enzyme catalyses 3'-dephospho-CoA + ATP = ADP + CoA + H(+). The protein operates within cofactor biosynthesis; coenzyme A biosynthesis; CoA from (R)-pantothenate: step 5/5. Catalyzes the phosphorylation of the 3'-hydroxyl group of dephosphocoenzyme A to form coenzyme A. In Chlamydia trachomatis serovar A (strain ATCC VR-571B / DSM 19440 / HAR-13), this protein is Dephospho-CoA kinase.